Here is a 102-residue protein sequence, read N- to C-terminus: Monothiol glutaredoxin-S9 (102 aa).

The region spanning Met-1–Leu-101 is the Glutaredoxin domain. Cys-21 contacts [2Fe-2S] cluster.

It belongs to the glutaredoxin family. CC-type subfamily.

The protein resides in the cytoplasm. Functionally, may only reduce GSH-thiol disulfides, but not protein disulfides. This Arabidopsis thaliana (Mouse-ear cress) protein is Monothiol glutaredoxin-S9 (GRXS9).